We begin with the raw amino-acid sequence, 544 residues long: Protein anon-37Cs (544 aa).

The protein resides in the cytoplasm. Functionally, has a non-vital function. In Drosophila lebanonensis (Fruit fly), this protein is Protein anon-37Cs (anon-37Cs).